A 146-amino-acid polypeptide reads, in one-letter code: Large ribosomal subunit protein uL15 (146 aa).

The tract at residues 18–45 (VLGRGLGCGKGKTSGRGHKGQKARSGCA) is disordered. The span at 30–39 (TSGRGHKGQK) shows a compositional bias: basic residues.

It belongs to the universal ribosomal protein uL15 family. In terms of assembly, part of the 50S ribosomal subunit.

Its function is as follows. Binds to the 23S rRNA. The polypeptide is Large ribosomal subunit protein uL15 (Anaplasma marginale (strain St. Maries)).